A 503-amino-acid chain; its full sequence is Probable cytosol aminopeptidase (503 aa).

Mn(2+)-binding residues include Lys-270 and Asp-275. Lys-282 is a catalytic residue. Positions 293, 352, and 354 each coordinate Mn(2+). Arg-356 is a catalytic residue.

This sequence belongs to the peptidase M17 family. It depends on Mn(2+) as a cofactor.

The protein resides in the cytoplasm. The catalysed reaction is Release of an N-terminal amino acid, Xaa-|-Yaa-, in which Xaa is preferably Leu, but may be other amino acids including Pro although not Arg or Lys, and Yaa may be Pro. Amino acid amides and methyl esters are also readily hydrolyzed, but rates on arylamides are exceedingly low.. The enzyme catalyses Release of an N-terminal amino acid, preferentially leucine, but not glutamic or aspartic acids.. Presumably involved in the processing and regular turnover of intracellular proteins. Catalyzes the removal of unsubstituted N-terminal amino acids from various peptides. In Escherichia fergusonii (strain ATCC 35469 / DSM 13698 / CCUG 18766 / IAM 14443 / JCM 21226 / LMG 7866 / NBRC 102419 / NCTC 12128 / CDC 0568-73), this protein is Probable cytosol aminopeptidase.